We begin with the raw amino-acid sequence, 695 residues long: Centrosomal protein kizuna (695 aa).

The span at 1–12 (MPRGRGGGGGGL) shows a compositional bias: gly residues. The disordered stretch occupies residues 1 to 24 (MPRGRGGGGGGLRQASATSAPLAS). Over residues 15–24 (ASATSAPLAS) the composition is skewed to low complexity. 2 coiled-coil regions span residues 29 to 57 (ERVG…EYNK) and 102 to 132 (VEHL…LSKD). Disordered stretches follow at residues 261-313 (EIGS…SDRE), 351-391 (HSAW…SDLT), 444-465 (QSFP…EKVP), and 633-695 (SEAS…FYDT). Polar residues-rich tracts occupy residues 263-274 (GSSTQHSKSNLS) and 282-297 (LHSS…NSIT). Composition is skewed to basic and acidic residues over residues 299 to 313 (LKCD…SDRE) and 360 to 377 (DLDH…KHEE). A compositionally biased stretch (low complexity) spans 382 to 391 (GSSCSSSDLT). Threonine 391 carries the phosphothreonine; by PLK1 modification. Residues 448-465 (DSKREPSPDSPRQPEKVP) show a composition bias toward basic and acidic residues. The segment covering 633–645 (SEASFSSSEGSPL) has biased composition (low complexity). Phosphoserine is present on residues serine 667, serine 670, and serine 672. The span at 676-686 (AALRPRDHDMP) shows a compositional bias: basic and acidic residues.

It belongs to the kizuna family. As to quaternary structure, interacts with AKAP9, CEP72, ODF2, PCNT and TUBGCP2. Post-translationally, phosphorylation at Thr-391 by PLK1 is not needed for centrosomal localization or pericentriolar material expansion but is indispensable for spindle-pole stabilization.

The protein localises to the cytoplasm. It is found in the cytoskeleton. Its subcellular location is the microtubule organizing center. It localises to the centrosome. The protein resides in the cilium basal body. Functionally, centrosomal protein required for establishing a robust mitotic centrosome architecture that can endure the forces that converge on the centrosomes during spindle formation. Required for stabilizing the expanded pericentriolar material around the centriole. The protein is Centrosomal protein kizuna (Kiz) of Mus musculus (Mouse).